The chain runs to 367 residues: Glutamate 5-kinase (367 aa).

Residue K10 coordinates ATP. Positions 50, 137, and 149 each coordinate substrate. ATP-binding positions include 169-170 and 211-217; these read TD and TGGMSTK. In terms of domain architecture, PUA spans 275 to 353; that stretch reads AGEITVDEGA…QEIDAILGYE (79 aa).

It belongs to the glutamate 5-kinase family.

Its subcellular location is the cytoplasm. It catalyses the reaction L-glutamate + ATP = L-glutamyl 5-phosphate + ADP. The protein operates within amino-acid biosynthesis; L-proline biosynthesis; L-glutamate 5-semialdehyde from L-glutamate: step 1/2. Functionally, catalyzes the transfer of a phosphate group to glutamate to form L-glutamate 5-phosphate. This chain is Glutamate 5-kinase, found in Shigella flexneri.